We begin with the raw amino-acid sequence, 118 residues long: Basic phospholipase A2 4 (118 aa).

7 disulfide bridges follow: C11–C71, C27–C117, C29–C45, C44–C98, C51–C91, C60–C84, and C78–C89. Ca(2+) contacts are provided by Y28, G30, and G32. H48 is an active-site residue. D49 is a Ca(2+) binding site. The active site involves D92.

It belongs to the phospholipase A2 family. Group I subfamily. D49 sub-subfamily. In terms of assembly, monomer. Ca(2+) is required as a cofactor. In terms of tissue distribution, expressed by the venom gland.

It localises to the secreted. It catalyses the reaction a 1,2-diacyl-sn-glycero-3-phosphocholine + H2O = a 1-acyl-sn-glycero-3-phosphocholine + a fatty acid + H(+). PLA2 catalyzes the calcium-dependent hydrolysis of the 2-acyl groups in 3-sn-phosphoglycerides. This Laticauda semifasciata (Black-banded sea krait) protein is Basic phospholipase A2 4.